A 610-amino-acid chain; its full sequence is Major facilitator superfamily multidrug transporter FLU1 (610 aa).

Residues N3 and N21 are each glycosylated (N-linked (GlcNAc...) asparagine). Residues 47–58 are compositionally biased toward polar residues; the sequence is GPTDSVESSSNT. The tract at residues 47-74 is disordered; it reads GPTDSVESSSNTADEENEINSFNAQNVK. Helical transmembrane passes span 165-185, 209-229, 231-251, 262-282, 292-312, 323-343, 408-428, 437-457, 478-498, 507-527, and 530-550; these read ILYC…SAMF, LFVF…ELFG, KLVM…VATA, FFAG…MADM, IAIF…LGAF, WTSY…TFLL, AFIY…FLGE, ELPY…IMLF, LEPM…LGWT, WIVP…IFLP, and NYII…NTFI. N-linked (GlcNAc...) asparagine glycosylation occurs at N568. A helical transmembrane segment spans residues 573 to 593; sequence WASTLLGCIGILLLPMPFVFY.

This sequence belongs to the major facilitator superfamily. DHA1 family. Polyamines/proton antiporter (TC 2.A.1.2.16) subfamily.

The protein localises to the cell membrane. In terms of biological role, major facilitator superfamily transporter that mediates resistance to structurally and functionally unrelated compounds including cycloheximide but also azoles such as fuconazole, ketoconazole and itraconazole. Also mediates efflux of histatin 5, a salivary human antimicrobial peptide, and is responsible for reduction of its toxicity in C.albicans. This chain is Major facilitator superfamily multidrug transporter FLU1, found in Candida albicans (strain SC5314 / ATCC MYA-2876) (Yeast).